A 360-amino-acid polypeptide reads, in one-letter code: Peptide chain release factor 1 (360 aa).

Gln-235 is modified (N5-methylglutamine). The segment at 285–313 is disordered; the sequence is KRQQAEASTRRNLLGSGDRSDRNRTYNFP.

This sequence belongs to the prokaryotic/mitochondrial release factor family. In terms of processing, methylated by PrmC. Methylation increases the termination efficiency of RF1.

Its subcellular location is the cytoplasm. Functionally, peptide chain release factor 1 directs the termination of translation in response to the peptide chain termination codons UAG and UAA. The chain is Peptide chain release factor 1 from Enterobacter sp. (strain 638).